The primary structure comprises 96 residues: Antitoxin TacA3 (96 aa).

The segment at 61-96 (YLTERDTKMIMEILDNPPAPNEKLLAAAFALPDMKK) is neutralization domain.

Belongs to the TacA antitoxin family. As to quaternary structure, forms a complex with cognate toxin TacT3. Forms a 4:2 antitoxin:toxin complex with cognate toxin TacT3. Forms a 4:4 antitoxin:toxin complex with promoter DNA, where 2 TacT3 dimers bridge 2 TacA3 dimers. Only TacA3 contacts promoter DNA.

Its function is as follows. Antitoxin component of a type II toxin-antitoxin (TA) system. Counteracts the toxic effect of cognate toxin TacT3, but not TacT1 or TacT2. Plays a role in persister cell formation. Functionally, the TacA3-TacT3 complex both represses and derepresses expression of its own operon. The hexameric 4:2 TacA3-TacT3 complex binds promoter DNA and represses its transcription; both subunits are required. The octomeric 4:4 TacA3-TacT3 complex derepresses the operon. The shift from hexameric to octomeric complex probably alters DNA-binding, leading to dissociation from the operator DNA and derepression. Does not bind the promoter of the TacA1-TacT1 operon. This is Antitoxin TacA3 from Salmonella typhimurium (strain 14028s / SGSC 2262).